The sequence spans 176 residues: MPGCLVLVVGPSGAGKDTLLRLARAALAGDPRYVFPRRLVTRPPSADEDNDEIDEAAFAEGCAAGRFTLSWRAHGLGYALPEAVGRRVAEGHVVVCNVSRRVVAGARESGRRVSVVEITAPPEILARRIAARGRAQDGDLAARLAREGGVTADLTILNTGAADEAAARLVAHLRAC.

Residue 10-17 participates in ATP binding; that stretch reads GPSGAGKD.

The protein belongs to the ribose 1,5-bisphosphokinase family.

The catalysed reaction is alpha-D-ribose 1,5-bisphosphate + ATP = 5-phospho-alpha-D-ribose 1-diphosphate + ADP. Its pathway is metabolic intermediate biosynthesis; 5-phospho-alpha-D-ribose 1-diphosphate biosynthesis; 5-phospho-alpha-D-ribose 1-diphosphate from D-ribose 5-phosphate (route II): step 3/3. Catalyzes the phosphorylation of ribose 1,5-bisphosphate to 5-phospho-D-ribosyl alpha-1-diphosphate (PRPP). In Methylobacterium radiotolerans (strain ATCC 27329 / DSM 1819 / JCM 2831 / NBRC 15690 / NCIMB 10815 / 0-1), this protein is Ribose 1,5-bisphosphate phosphokinase PhnN.